A 304-amino-acid chain; its full sequence is Agmatinase (304 aa).

Residues His126, Asp149, His151, Asp153, Asp230, and Asp232 each contribute to the Mn(2+) site.

It belongs to the arginase family. Agmatinase subfamily. Mn(2+) is required as a cofactor.

The enzyme catalyses agmatine + H2O = urea + putrescine. The protein operates within amine and polyamine biosynthesis; putrescine biosynthesis via agmatine pathway; putrescine from agmatine: step 1/1. Catalyzes the formation of putrescine from agmatine. The chain is Agmatinase from Edwardsiella ictaluri (strain 93-146).